The following is a 436-amino-acid chain: NADH-quinone oxidoreductase subunit D 1 (436 aa).

The protein belongs to the complex I 49 kDa subunit family. NDH-1 is composed of 14 different subunits. Subunits NuoB, C, D, E, F, and G constitute the peripheral sector of the complex.

The protein localises to the cell inner membrane. The catalysed reaction is a quinone + NADH + 5 H(+)(in) = a quinol + NAD(+) + 4 H(+)(out). Its function is as follows. NDH-1 shuttles electrons from NADH, via FMN and iron-sulfur (Fe-S) centers, to quinones in the respiratory chain. The immediate electron acceptor for the enzyme in this species is believed to be ubiquinone. Couples the redox reaction to proton translocation (for every two electrons transferred, four hydrogen ions are translocated across the cytoplasmic membrane), and thus conserves the redox energy in a proton gradient. This is NADH-quinone oxidoreductase subunit D 1 from Stenotrophomonas maltophilia (strain R551-3).